Here is a 214-residue protein sequence, read N- to C-terminus: Chaperone protein TorD (214 aa).

It belongs to the TorD/DmsD family. TorD subfamily.

The protein resides in the cytoplasm. Its function is as follows. Involved in the biogenesis of TorA. Acts on TorA before the insertion of the molybdenum cofactor and, as a result, probably favors a conformation of the apoenzyme that is competent for acquiring the cofactor. This is Chaperone protein TorD from Aeromonas salmonicida (strain A449).